A 94-amino-acid polypeptide reads, in one-letter code: Potassium channel protein kcv (94 aa).

The chain crosses the membrane as a helical span at residues 14 to 34; sequence FMIHLFILAMFVMIYKFFPGG. Asparagine 38 is a glycosylation site (N-linked (GlcNAc...) asparagine; by host). A helical transmembrane segment spans residues 74 to 94; the sequence is TGAKLCTIAHIVTVFFIVLTL.

The protein belongs to the two pore domain potassium channel (TC 1.A.1.12) family.

It is found in the membrane. Functionally, potassium-selective channel essential in the virus replication cycle. May be involved in preventing multiple infections (Potential). In Paramecium bursaria Chlorella virus 1 (PBCV-1), this protein is Potassium channel protein kcv (A250R).